A 168-amino-acid polypeptide reads, in one-letter code: Large ribosomal subunit protein bL9 (168 aa).

The disordered stretch occupies residues 149–168 (QSFEEEPAPEAPAEEAEAAE). Residues 152–168 (EEEPAPEAPAEEAEAAE) show a composition bias toward acidic residues.

This sequence belongs to the bacterial ribosomal protein bL9 family.

Functionally, binds to the 23S rRNA. The polypeptide is Large ribosomal subunit protein bL9 (Desulfovibrio desulfuricans (strain ATCC 27774 / DSM 6949 / MB)).